The chain runs to 492 residues: Pre-mRNA-splicing factor sap61 (492 aa).

The segment at 243 to 267 adopts a C2H2-type zinc-finger fold; it reads FYCEVCQKFFGKITVFEAHKKSKAH. Disordered regions lie at residues 268–291 and 337–365; these read NKAV…KQKG and AAER…QDDE. Positions 276 to 286 are enriched in low complexity; it reads SSSPSTTSNTN. The segment covering 345 to 354 has biased composition (polar residues); that stretch reads QSTPSVSVEG. Positions 355 to 365 are enriched in acidic residues; sequence NQDEESDQDDE. Ser-360 carries the post-translational modification Phosphoserine. Residues 397 to 428 form a Matrin-type zinc finger; it reads FPCEICGNYVYMGRKAFDKHFTEQRHIYGLKC.

The protein belongs to the SF3A3 family. As to quaternary structure, belongs to the 40S cdc5-associated complex (or cwf complex), a spliceosome sub-complex reminiscent of a late-stage spliceosome composed of the U2, U5 and U6 snRNAs and at least brr2, cdc5, cwf2/prp3, cwf3/syf1, cwf4/syf3, cwf5/ecm2, spp42/cwf6, cwf7/spf27, cwf8, cwf9, cwf10, cwf11, cwf12, prp45/cwf13, cwf14, cwf15, cwf16, cwf17, cwf18, cwf19, cwf20, cwf21, cwf22, cwf23, cwf24, cwf25, cwf26, cyp7/cwf27, cwf28, cwf29/ist3, lea1, msl1, prp5/cwf1, prp10, prp12/sap130, prp17, prp22, sap61, sap62, sap114, sap145, slu7, smb1, smd1, smd3, smf1, smg1 and syf2.

Its subcellular location is the nucleus. The protein localises to the cytoplasm. Functionally, involved in mRNA splicing where it associates with cdc5 and the other cwf proteins as part of the spliceosome. The chain is Pre-mRNA-splicing factor sap61 (sap61) from Schizosaccharomyces pombe (strain 972 / ATCC 24843) (Fission yeast).